Here is a 206-residue protein sequence, read N- to C-terminus: MLSRATRLLSTKNVVVNSIVKHTTIRSFASHGGGEAGGAYPTEPEAGTQMITRRVEFGDAVYSYKHGNFIVDPIQIRELAEEQQQQQHHVHGPGCSHGHHHDSHANDGHHDEHHDEHHDHVNPDDVEDEFPRGYFLNTPPSVPYPMNPYYLTALCLLPIIGSLFSIRYFDNKSENDYELFRSEYLEANPALKQKYYDITHKYPLSH.

The interval 81–132 is disordered; that stretch reads EEQQQQQHHVHGPGCSHGHHHDSHANDGHHDEHHDEHHDHVNPDDVEDEFPR. The span at 82 to 96 shows a compositional bias: low complexity; that stretch reads EQQQQQHHVHGPGCS. Over residues 103-123 the composition is skewed to basic and acidic residues; it reads SHANDGHHDEHHDEHHDHVNP. The helical transmembrane segment at 150 to 166 threads the bilayer; that stretch reads YLTALCLLPIIGSLFSI.

The protein resides in the membrane. This is an uncharacterized protein from Dictyostelium discoideum (Social amoeba).